The chain runs to 27 residues: Natriuretic peptides A (27 aa).

C7 and C23 form a disulfide bridge.

The protein belongs to the natriuretic peptide family.

The protein resides in the secreted. Hormone playing a key role in cardiovascular homeostasis through regulation of natriuresis, diuresis, and vasodilation. Has a cGMP-stimulating activity. The sequence is that of Natriuretic peptides A (nppa) from Anguilla japonica (Japanese eel).